The sequence spans 499 residues: Glycerol kinase (499 aa).

Threonine 12 is an ADP binding site. 3 residues coordinate ATP: threonine 12, threonine 13, and serine 14. Threonine 12 is a binding site for sn-glycerol 3-phosphate. Residue arginine 16 coordinates ADP. The sn-glycerol 3-phosphate site is built by arginine 82, glutamate 83, tyrosine 134, and aspartate 243. Residues arginine 82, glutamate 83, tyrosine 134, aspartate 243, and glutamine 244 each contribute to the glycerol site. Threonine 265 and glycine 308 together coordinate ADP. The ATP site is built by threonine 265, glycine 308, glutamine 312, and glycine 409. ADP is bound by residues glycine 409 and asparagine 413.

Belongs to the FGGY kinase family. As to quaternary structure, homotetramer and homodimer (in equilibrium).

It carries out the reaction glycerol + ATP = sn-glycerol 3-phosphate + ADP + H(+). It participates in polyol metabolism; glycerol degradation via glycerol kinase pathway; sn-glycerol 3-phosphate from glycerol: step 1/1. With respect to regulation, activated by phosphorylation and inhibited by fructose 1,6-bisphosphate (FBP). Key enzyme in the regulation of glycerol uptake and metabolism. Catalyzes the phosphorylation of glycerol to yield sn-glycerol 3-phosphate. The protein is Glycerol kinase of Lachnoclostridium phytofermentans (strain ATCC 700394 / DSM 18823 / ISDg) (Clostridium phytofermentans).